The sequence spans 452 residues: Phosphatidylinositol N-acetylglucosaminyltransferase GPI3 subunit (452 aa).

Residues 407–427 traverse the membrane as a helical segment; that stretch reads LYLLCGIVEYMLFFLLEWLYP.

This sequence belongs to the glycosyltransferase group 1 family. Component of the phosphatidylinositol N-acetylglucosaminyltransferase complex composed of at least GPI1, GPI2, GPI3, GPI15, GPI19 and ERI1.

It is found in the endoplasmic reticulum membrane. The catalysed reaction is a 1,2-diacyl-sn-glycero-3-phospho-(1D-myo-inositol) + UDP-N-acetyl-alpha-D-glucosamine = a 6-(N-acetyl-alpha-D-glucosaminyl)-1-(1,2-diacyl-sn-glycero-3-phospho)-1D-myo-inositol + UDP + H(+). It functions in the pathway glycolipid biosynthesis; glycosylphosphatidylinositol-anchor biosynthesis. Inhibited by Ras, probably via the interaction between RAS2 and ERI1. Functionally, catalytic subunit in the complex catalyzing the transfer of N-acetylglucosamine from UDP-N-acetylglucosamine to phosphatidylinositol, the first step of GPI biosynthesis. The polypeptide is Phosphatidylinositol N-acetylglucosaminyltransferase GPI3 subunit (SPT14) (Saccharomyces cerevisiae (strain YJM789) (Baker's yeast)).